The sequence spans 142 residues: Large ribosomal subunit protein uL13 (142 aa).

The protein belongs to the universal ribosomal protein uL13 family. As to quaternary structure, part of the 50S ribosomal subunit.

Its function is as follows. This protein is one of the early assembly proteins of the 50S ribosomal subunit, although it is not seen to bind rRNA by itself. It is important during the early stages of 50S assembly. The protein is Large ribosomal subunit protein uL13 of Chromobacterium violaceum (strain ATCC 12472 / DSM 30191 / JCM 1249 / CCUG 213 / NBRC 12614 / NCIMB 9131 / NCTC 9757 / MK).